The following is a 128-amino-acid chain: Aspartate 1-decarboxylase (128 aa).

Ser25 acts as the Schiff-base intermediate with substrate; via pyruvic acid in catalysis. Ser25 is modified (pyruvic acid (Ser)). A substrate-binding site is contributed by Thr57. Residue Tyr58 is the Proton donor of the active site. A substrate-binding site is contributed by 73–75 (GSA).

The protein belongs to the PanD family. As to quaternary structure, heterooctamer of four alpha and four beta subunits. Pyruvate serves as cofactor. Is synthesized initially as an inactive proenzyme, which is activated by self-cleavage at a specific serine bond to produce a beta-subunit with a hydroxyl group at its C-terminus and an alpha-subunit with a pyruvoyl group at its N-terminus.

The protein resides in the cytoplasm. It carries out the reaction L-aspartate + H(+) = beta-alanine + CO2. Its pathway is cofactor biosynthesis; (R)-pantothenate biosynthesis; beta-alanine from L-aspartate: step 1/1. Its function is as follows. Catalyzes the pyruvoyl-dependent decarboxylation of aspartate to produce beta-alanine. This Burkholderia pseudomallei (strain 668) protein is Aspartate 1-decarboxylase.